Consider the following 431-residue polypeptide: Adenylosuccinate synthetase (431 aa).

GTP contacts are provided by residues 12-18 (GDEGKGK) and 40-42 (GHT). Asp-13 (proton acceptor) is an active-site residue. Mg(2+) is bound by residues Asp-13 and Gly-40. IMP-binding positions include 13 to 16 (DEGK), 38 to 41 (NAGH), Thr-131, Arg-145, Gln-225, Thr-240, and Arg-304. The active-site Proton donor is the His-41. Position 300-306 (300-306 (TTTGRKR)) interacts with substrate. GTP-binding positions include Arg-306, 332–334 (KLD), and 414–416 (STS).

This sequence belongs to the adenylosuccinate synthetase family. Homodimer. Mg(2+) is required as a cofactor.

Its subcellular location is the cytoplasm. The enzyme catalyses IMP + L-aspartate + GTP = N(6)-(1,2-dicarboxyethyl)-AMP + GDP + phosphate + 2 H(+). It functions in the pathway purine metabolism; AMP biosynthesis via de novo pathway; AMP from IMP: step 1/2. Plays an important role in the de novo pathway of purine nucleotide biosynthesis. Catalyzes the first committed step in the biosynthesis of AMP from IMP. In Jannaschia sp. (strain CCS1), this protein is Adenylosuccinate synthetase.